The following is a 265-amino-acid chain: tRNA (guanine-N(1)-)-methyltransferase (265 aa).

S-adenosyl-L-methionine is bound by residues glycine 119 and valine 139 to leucine 144.

It belongs to the RNA methyltransferase TrmD family. Homodimer.

The protein resides in the cytoplasm. It carries out the reaction guanosine(37) in tRNA + S-adenosyl-L-methionine = N(1)-methylguanosine(37) in tRNA + S-adenosyl-L-homocysteine + H(+). Its function is as follows. Specifically methylates guanosine-37 in various tRNAs. The polypeptide is tRNA (guanine-N(1)-)-methyltransferase (Pseudoalteromonas atlantica (strain T6c / ATCC BAA-1087)).